A 1370-amino-acid chain; its full sequence is DNA polymerase II large subunit (1370 aa).

Disordered regions lie at residues 279–317 (IGAD…PRAA) and 1041–1081 (AGDA…DGGS).

Belongs to the archaeal DNA polymerase II family. As to quaternary structure, heterodimer of a large subunit and a small subunit. In terms of processing, this protein undergoes a protein self splicing that involves a post-translational excision of the intervening region (intein) followed by peptide ligation.

It catalyses the reaction DNA(n) + a 2'-deoxyribonucleoside 5'-triphosphate = DNA(n+1) + diphosphate. The catalysed reaction is Exonucleolytic cleavage in the 3'- to 5'-direction to yield nucleoside 5'-phosphates.. Its function is as follows. Possesses two activities: a DNA synthesis (polymerase) and an exonucleolytic activity that degrades single-stranded DNA in the 3'- to 5'-direction. Has a template-primer preference which is characteristic of a replicative DNA polymerase. The chain is DNA polymerase II large subunit (polC) from Halobacterium salinarum (strain ATCC 700922 / JCM 11081 / NRC-1) (Halobacterium halobium).